We begin with the raw amino-acid sequence, 626 residues long: tRNA uridine 5-carboxymethylaminomethyl modification enzyme MnmG (626 aa).

13-18 (GGGHAG) is an FAD binding site. 273-287 (GPRYCPSIEDKIHRF) lines the NAD(+) pocket.

It belongs to the MnmG family. As to quaternary structure, homodimer. Heterotetramer of two MnmE and two MnmG subunits. FAD is required as a cofactor.

The protein resides in the cytoplasm. Its function is as follows. NAD-binding protein involved in the addition of a carboxymethylaminomethyl (cmnm) group at the wobble position (U34) of certain tRNAs, forming tRNA-cmnm(5)s(2)U34. This chain is tRNA uridine 5-carboxymethylaminomethyl modification enzyme MnmG, found in Acinetobacter baumannii (strain AYE).